A 313-amino-acid chain; its full sequence is Protein FixB (313 aa).

255 to 283 (LYLAVGISGQIQHMVGANGAQTIFAINKD) provides a ligand contact to FAD.

This sequence belongs to the ETF alpha-subunit/FixB family. As to quaternary structure, heterodimer of FixA and FixB.

It functions in the pathway amine and polyamine metabolism; carnitine metabolism. Functionally, required for anaerobic carnitine reduction. May bring reductant to CaiA. The sequence is that of Protein FixB from Salmonella agona (strain SL483).